Reading from the N-terminus, the 362-residue chain is 3-dehydroquinate synthase (362 aa).

NAD(+) contacts are provided by residues 74-79, 108-112, 132-133, Lys145, Lys154, and 172-175; these read DGEGYK, GVIGD, TT, and TLDT. Zn(2+) contacts are provided by Glu187, His250, and His267.

The protein belongs to the sugar phosphate cyclases superfamily. Dehydroquinate synthase family. Requires Co(2+) as cofactor. Zn(2+) is required as a cofactor. NAD(+) serves as cofactor.

The protein localises to the cytoplasm. The catalysed reaction is 7-phospho-2-dehydro-3-deoxy-D-arabino-heptonate = 3-dehydroquinate + phosphate. It functions in the pathway metabolic intermediate biosynthesis; chorismate biosynthesis; chorismate from D-erythrose 4-phosphate and phosphoenolpyruvate: step 2/7. Catalyzes the conversion of 3-deoxy-D-arabino-heptulosonate 7-phosphate (DAHP) to dehydroquinate (DHQ). In Citrifermentans bemidjiense (strain ATCC BAA-1014 / DSM 16622 / JCM 12645 / Bem) (Geobacter bemidjiensis), this protein is 3-dehydroquinate synthase.